The primary structure comprises 245 residues: 1-(5-phosphoribosyl)-5-[(5-phosphoribosylamino)methylideneamino] imidazole-4-carboxamide isomerase (245 aa).

The Proton acceptor role is filled by aspartate 8. The active-site Proton donor is aspartate 130.

It belongs to the HisA/HisF family.

Its subcellular location is the cytoplasm. The enzyme catalyses 1-(5-phospho-beta-D-ribosyl)-5-[(5-phospho-beta-D-ribosylamino)methylideneamino]imidazole-4-carboxamide = 5-[(5-phospho-1-deoxy-D-ribulos-1-ylimino)methylamino]-1-(5-phospho-beta-D-ribosyl)imidazole-4-carboxamide. It functions in the pathway amino-acid biosynthesis; L-histidine biosynthesis; L-histidine from 5-phospho-alpha-D-ribose 1-diphosphate: step 4/9. This Pseudomonas putida (strain GB-1) protein is 1-(5-phosphoribosyl)-5-[(5-phosphoribosylamino)methylideneamino] imidazole-4-carboxamide isomerase.